The chain runs to 161 residues: Large ribosomal subunit protein uL11 (161 aa).

The protein belongs to the universal ribosomal protein uL11 family. In terms of assembly, part of the ribosomal stalk of the 50S ribosomal subunit. Interacts with L10 and the large rRNA to form the base of the stalk. L10 forms an elongated spine to which L12 dimers bind in a sequential fashion forming a multimeric L10(L12)X complex.

Functionally, forms part of the ribosomal stalk which helps the ribosome interact with GTP-bound translation factors. This Methanosarcina acetivorans (strain ATCC 35395 / DSM 2834 / JCM 12185 / C2A) protein is Large ribosomal subunit protein uL11.